The primary structure comprises 303 residues: Probable cell division protein WhiA (303 aa).

The segment at residues 272-303 is a DNA-binding region (H-T-H motif); it reads SIQQLADSLSTPLTKSGVNHRLRKINKIADEL.

Belongs to the WhiA family.

Functionally, involved in cell division and chromosome segregation. The polypeptide is Probable cell division protein WhiA (Streptococcus pneumoniae (strain Hungary19A-6)).